A 221-amino-acid polypeptide reads, in one-letter code: Lectin L6 (221 aa).

6 consecutive repeat copies span residues 1 to 38 (VQWH…PCYD), 39 to 75 (GQWT…VDGS), 76 to 113 (GSWV…KPCN), 114 to 150 (GAWT…VDGS), 151 to 188 (GSWQ…KPCS), and 189 to 221 (GQWS…YRSG). A 6 X approximate tandem repeats region spans residues 1 to 221 (VQWHQIPGKL…NSVDNIYRSG (221 aa)). Cys32 and Cys36 are oxidised to a cystine. Cys108 and Cys112 form a disulfide bridge. Cys183 and Cys187 are disulfide-bonded.

The protein belongs to the tectonin family. As to expression, hemocytes.

The protein resides in the cytoplasmic vesicle. Its subcellular location is the secretory vesicle. Functionally, lipopolysaccharide-binding protein with Gram-negative antibacterial activity. Binds zinc and calcium. In Tachypleus tridentatus (Japanese horseshoe crab), this protein is Lectin L6.